The following is a 641-amino-acid chain: 1-deoxy-D-xylulose-5-phosphate synthase (641 aa).

Thiamine diphosphate-binding positions include histidine 71 and 112–114 (SHA). Mg(2+) is bound at residue aspartate 144. Thiamine diphosphate is bound by residues 145-146 (GA), asparagine 173, tyrosine 284, and glutamate 365. Asparagine 173 serves as a coordination point for Mg(2+).

It belongs to the transketolase family. DXPS subfamily. Homodimer. Requires Mg(2+) as cofactor. It depends on thiamine diphosphate as a cofactor.

It catalyses the reaction D-glyceraldehyde 3-phosphate + pyruvate + H(+) = 1-deoxy-D-xylulose 5-phosphate + CO2. Its pathway is metabolic intermediate biosynthesis; 1-deoxy-D-xylulose 5-phosphate biosynthesis; 1-deoxy-D-xylulose 5-phosphate from D-glyceraldehyde 3-phosphate and pyruvate: step 1/1. Its function is as follows. Catalyzes the acyloin condensation reaction between C atoms 2 and 3 of pyruvate and glyceraldehyde 3-phosphate to yield 1-deoxy-D-xylulose-5-phosphate (DXP). This chain is 1-deoxy-D-xylulose-5-phosphate synthase, found in Mycobacterium avium (strain 104).